A 345-amino-acid polypeptide reads, in one-letter code: Protein Tob1 (345 aa).

A Bipartite nuclear localization signal motif is present at residues 22-39 (RRRVNIFGEELERLLKKK). The important for nuclear localization stretch occupies residues 82 to 92 (VRGNLPQDLSV). Positions 144–160 (DPASSVSSSPSPPFGHS) are enriched in low complexity. The disordered stretch occupies residues 144–171 (DPASSVSSSPSPPFGHSAAVSPTFMPRS). Residues 161–218 (AAVSPTFMPRSTQPLTFTTATFAATKFGSTKMKNSGRSNKVARTSPINLGLNVNDLLK) form a required for interaction with CPEB3 region. Thr204 is subject to Phosphothreonine. Residues 226-234 (MHSLYGLGL) carry the Nuclear export signal motif. A disordered region spans residues 231-267 (GLGLGSQQQPQQQQQPAQPPPPPPPPQQQQQQKTSAL). Positions 237-246 (QQQPQQQQQP) are enriched in low complexity. Residues 247–257 (AQPPPPPPPPQ) show a composition bias toward pro residues.

This sequence belongs to the BTG family. As to quaternary structure, interacts with ERBB2. Interacts with CNOT7. Interacts with CPEB3 (via C-terminal RNA-binding region); recruits CNOT7 to CPEB3 to form a ternary complex required for mRNA deadenylation and decay. Interacts with CNOT8. Interacts with CPEB4. Phosphorylated on Ser and Thr residues. As to expression, ubiquitous.

Its subcellular location is the cytoplasm. The protein localises to the nucleus. In terms of biological role, anti-proliferative protein; the function is mediated by association with deadenylase subunits of the CCR4-NOT complex. Mediates CPEB3-accelerated mRNA deadenylation by binding to CPEB3 and recruiting CNOT7 which leads to target mRNA deadenylation and decay. This is Protein Tob1 (TOB1) from Homo sapiens (Human).